Consider the following 332-residue polypeptide: MNLLNLPKIELHCHLDGSLRVETAIELAKKEGVKLDSYEYDKVKELLVIPKECNSLEDYLNRFALPVKLLQRAENLERVAFELMEDASKENVKYIEIRFAPLLHLEKGMTQKEVIESVIKGIRKAEELYDIKGNLILSCLRHHSIDSVYEVIEEGKNFIGKGVVAIDLAGGELENFVKPYEEVMKLARKAGFRVTIHAGETGYGKNVRDAIELLGAERIGHGLFIFNDEEAYNLVKEKGVTLEMCPKSNIDTKGVNKYEEHPIYKYHKDNIKVNLSTDNRTVSNINLTEEFENVHKTFNIDFEDYKKIYLNSVEASFCSEELKEKLKLSIII.

Residues His-12 and His-14 each contribute to the Zn(2+) site. His-14, Asp-16, and Gly-170 together coordinate substrate. A Zn(2+)-binding site is contributed by His-197. Residue Glu-200 is the Proton donor of the active site. Asp-278 serves as a coordination point for Zn(2+).

Belongs to the metallo-dependent hydrolases superfamily. Adenosine and AMP deaminases family. Adenosine deaminase subfamily. Zn(2+) is required as a cofactor.

It catalyses the reaction adenosine + H2O + H(+) = inosine + NH4(+). The catalysed reaction is 2'-deoxyadenosine + H2O + H(+) = 2'-deoxyinosine + NH4(+). Its function is as follows. Catalyzes the hydrolytic deamination of adenosine and 2-deoxyadenosine. In Clostridium perfringens (strain ATCC 13124 / DSM 756 / JCM 1290 / NCIMB 6125 / NCTC 8237 / Type A), this protein is Adenosine deaminase.